Consider the following 410-residue polypeptide: Cysteine desulfurase (410 aa).

N6-(pyridoxal phosphate)lysine is present on Lys-227. Catalysis depends on Cys-365, which acts as the Cysteine persulfide intermediate.

The protein belongs to the class-V pyridoxal-phosphate-dependent aminotransferase family. Csd subfamily. Homodimer. Interacts with SufE and the SufBCD complex composed of SufB, SufC and SufD. The interaction with SufE is required to mediate the direct transfer of the sulfur atom from the S-sulfanylcysteine. It depends on pyridoxal 5'-phosphate as a cofactor.

Its subcellular location is the cytoplasm. It carries out the reaction (sulfur carrier)-H + L-cysteine = (sulfur carrier)-SH + L-alanine. The enzyme catalyses L-selenocysteine + AH2 = hydrogenselenide + L-alanine + A + H(+). Its pathway is cofactor biosynthesis; iron-sulfur cluster biosynthesis. Cysteine desulfurases mobilize the sulfur from L-cysteine to yield L-alanine, an essential step in sulfur metabolism for biosynthesis of a variety of sulfur-containing biomolecules. Component of the suf operon, which is activated and required under specific conditions such as oxidative stress and iron limitation. Acts as a potent selenocysteine lyase in vitro, that mobilizes selenium from L-selenocysteine. Selenocysteine lyase activity is however unsure in vivo. The protein is Cysteine desulfurase of Wigglesworthia glossinidia brevipalpis.